The primary structure comprises 143 residues: Large ribosomal subunit protein uL16c (143 aa).

It belongs to the universal ribosomal protein uL16 family. In terms of assembly, part of the 50S ribosomal subunit.

It localises to the plastid. The protein resides in the chloroplast. This is Large ribosomal subunit protein uL16c from Spirogyra maxima (Green alga).